A 220-amino-acid chain; its full sequence is Large ribosomal subunit protein uL16 (220 aa).

This sequence belongs to the universal ribosomal protein uL16 family. In terms of assembly, component of the small ribosomal subunit. Mature ribosomes consist of a small (40S) and a large (60S) subunit. The 40S subunit contains about 33 different proteins and 1 molecule of RNA (18S). The 60S subunit contains about 49 different proteins and 3 molecules of RNA (25S, 5.8S and 5S).

The polypeptide is Large ribosomal subunit protein uL16 (RPL10) (Vitis riparia (Frost grape)).